A 123-amino-acid chain; its full sequence is Small ribosomal subunit protein uS12 (123 aa).

Asp-89 carries the 3-methylthioaspartic acid modification. The disordered stretch occupies residues 101 to 123 (SLDTSGVKDRKQGRSKYGAKRPK). Basic residues predominate over residues 113 to 123 (GRSKYGAKRPK).

This sequence belongs to the universal ribosomal protein uS12 family. Part of the 30S ribosomal subunit. Contacts proteins S8 and S17. May interact with IF1 in the 30S initiation complex.

Functionally, with S4 and S5 plays an important role in translational accuracy. In terms of biological role, interacts with and stabilizes bases of the 16S rRNA that are involved in tRNA selection in the A site and with the mRNA backbone. Located at the interface of the 30S and 50S subunits, it traverses the body of the 30S subunit contacting proteins on the other side and probably holding the rRNA structure together. The combined cluster of proteins S8, S12 and S17 appears to hold together the shoulder and platform of the 30S subunit. In Stutzerimonas stutzeri (strain A1501) (Pseudomonas stutzeri), this protein is Small ribosomal subunit protein uS12.